The chain runs to 264 residues: Synaptophysin-like protein 2 (264 aa).

Residues 1–33 lie on the Cytoplasmic side of the membrane; it reads MSSTESPGRTSDKSPRQQVDRLLLGLRWQRLEE. The 209-residue stretch at 30–238 folds into the MARVEL domain; that stretch reads RLEEPLGFIK…NCWFVFKETP (209 aa). The helical transmembrane segment at 34-54 threads the bilayer; the sequence is PLGFIKVLQWLFAIFAFGSCG. Topologically, residues 55–116 are vesicular; the sequence is SYSGETGALV…LMGDFSAPAE (62 aa). A helical membrane pass occupies residues 117–137; sequence FFVTLGIFSFFYTMAALVIYL. Over 138–150 the chain is Cytoplasmic; sequence RFHKLYTENKRFP. A helical membrane pass occupies residues 151 to 171; that stretch reads LVDFCVTVSFTFFWLVAAAAW. The Vesicular portion of the chain corresponds to 172–213; the sequence is GKGLTDVKGATRPSSLTAAMSVCHGEEAVCSAGATPSMGLAN. Asparagine 213 carries an N-linked (GlcNAc...) asparagine glycan. Residues 214–234 form a helical membrane-spanning segment; sequence LSVLFGFINFFLWAGNCWFVF. Over 235 to 264 the chain is Cytoplasmic; it reads KETPWHGQGQDQGQGPSQESAAEQGAVEKQ. The tract at residues 242-264 is disordered; it reads QGQDQGQGPSQESAAEQGAVEKQ.

This sequence belongs to the synaptophysin/synaptobrevin family. In terms of tissue distribution, expressed abundantly in skeletal muscle and at lower levels in the kidney.

Its subcellular location is the membrane. Functionally, involved in communication between the T-tubular and junctional sarcoplasmic reticulum (SR) membranes. This is Synaptophysin-like protein 2 (Sypl2) from Mus musculus (Mouse).